The following is a 428-amino-acid chain: GTPase Obg (428 aa).

The 158-residue stretch at 1–158 folds into the Obg domain; it reads MFVDQVKIYV…RYVTLELKLL (158 aa). One can recognise an OBG-type G domain in the interval 159 to 329; it reads ADVGLVGFPS…LLFAIADLLE (171 aa). GTP-binding positions include 165 to 172, 190 to 194, 212 to 215, 282 to 285, and 310 to 312; these read GFPSVGKS, FTTIV, DLPG, NKMD, and SAV. Mg(2+) is bound by residues Ser-172 and Thr-192. One can recognise an OCT domain in the interval 350–428; the sequence is KLEKEEAPFH…LLNYEFEFVD (79 aa).

This sequence belongs to the TRAFAC class OBG-HflX-like GTPase superfamily. OBG GTPase family. Monomer. It depends on Mg(2+) as a cofactor.

The protein localises to the cytoplasm. Functionally, an essential GTPase which binds GTP, GDP and possibly (p)ppGpp with moderate affinity, with high nucleotide exchange rates and a fairly low GTP hydrolysis rate. Plays a role in control of the cell cycle, stress response, ribosome biogenesis and in those bacteria that undergo differentiation, in morphogenesis control. In Anoxybacillus flavithermus (strain DSM 21510 / WK1), this protein is GTPase Obg.